The chain runs to 173 residues: NADH-ubiquinone oxidoreductase chain 6 (173 aa).

5 helical membrane-spanning segments follow: residues 1–21, 27–47, 48–68, 87–107, and 139–159; these read MTYF…AVAS, YGVV…VNLG, VSFV…VVFV, VMGY…LGGF, and YGVG…FVVL.

The protein belongs to the complex I subunit 6 family.

Its subcellular location is the mitochondrion membrane. It catalyses the reaction a ubiquinone + NADH + 5 H(+)(in) = a ubiquinol + NAD(+) + 4 H(+)(out). Its function is as follows. Core subunit of the mitochondrial membrane respiratory chain NADH dehydrogenase (Complex I) that is believed to belong to the minimal assembly required for catalysis. Complex I functions in the transfer of electrons from NADH to the respiratory chain. The immediate electron acceptor for the enzyme is believed to be ubiquinone. This is NADH-ubiquinone oxidoreductase chain 6 (MT-ND6) from Coturnix japonica (Japanese quail).